We begin with the raw amino-acid sequence, 103 residues long: Conantokin R1-A (103 aa).

A signal peptide spans 1–21 (MQLYTYLYLLVPLVTFHLILG). The propeptide occupies 22-79 (TGTLDHGGALTERRSTDATALKPEPVLQKSAARSTDDNGKDRLTQMKRILKKRGNNPR). The segment at 34-83 (RRSTDATALKPEPVLQKSAARSTDDNGKDRLTQMKRILKKRGNNPRADEE) is disordered. Positions 55–65 (STDDNGKDRLT) are enriched in basic and acidic residues. 3 positions are modified to 4-carboxyglutamate: Glu-82, Glu-83, and Glu-89.

Belongs to the conotoxin B superfamily. Requires Ca(2+) as cofactor. It depends on Mg(2+) as a cofactor. Expressed by the venom duct.

The protein localises to the secreted. Conantokins inhibit N-methyl-D-aspartate (NMDA) receptors. This toxin has the highest potency for the NR2B/GRIN2B subunit (IC(50)=0.11 uM), followed by NR2D/GRIN2D (IC(50)=0.48 uM), NR2A/GRIN2A (IC(50)=2.1 uM), and NR2C/GRIN2C (IC(50)=6.1 uM) subunits when tested on rat receptors. This is Conantokin R1-A from Conus rolani (Cone snail).